The primary structure comprises 148 residues: NADPH-dependent 7-cyano-7-deazaguanine reductase (148 aa).

Cys-50 functions as the Thioimide intermediate in the catalytic mechanism. The active-site Proton donor is the Asp-57. Residues 72-74 and 91-92 each bind substrate; these read VES and HE.

It belongs to the GTP cyclohydrolase I family. QueF type 1 subfamily.

It localises to the cytoplasm. The catalysed reaction is 7-aminomethyl-7-carbaguanine + 2 NADP(+) = 7-cyano-7-deazaguanine + 2 NADPH + 3 H(+). The protein operates within tRNA modification; tRNA-queuosine biosynthesis. In terms of biological role, catalyzes the NADPH-dependent reduction of 7-cyano-7-deazaguanine (preQ0) to 7-aminomethyl-7-deazaguanine (preQ1). The sequence is that of NADPH-dependent 7-cyano-7-deazaguanine reductase from Helicobacter pylori (strain P12).